The sequence spans 387 residues: Aminodeoxyfutalosine synthase (387 aa).

The region spanning 52 to 279 (VHFNVNRHLN…ARTQMATGAE (228 aa)) is the Radical SAM core domain. [4Fe-4S] cluster-binding residues include Cys66, Cys70, and Cys73.

The protein belongs to the radical SAM superfamily. MqnE family. Requires [4Fe-4S] cluster as cofactor.

The catalysed reaction is 3-[(1-carboxyvinyl)-oxy]benzoate + S-adenosyl-L-methionine + H2O = 6-amino-6-deoxyfutalosine + hydrogencarbonate + L-methionine + H(+). Its pathway is quinol/quinone metabolism; menaquinone biosynthesis. Radical SAM enzyme that catalyzes the addition of the adenosyl radical to the double bond of 3-[(1-carboxyvinyl)oxy]benzoate, leading to aminodeoxyfutalosine (AFL), a key intermediate in the formation of menaquinone (MK, vitamin K2) from chorismate. The chain is Aminodeoxyfutalosine synthase from Streptomyces coelicolor (strain ATCC BAA-471 / A3(2) / M145).